Here is a 240-residue protein sequence, read N- to C-terminus: Glutathione S-transferase theta-1 (240 aa).

Positions 2-82 constitute a GST N-terminal domain; it reads VLELYLDLLS…YLAHKYKVPD (81 aa). Residues H40, 53–54, and 66–67 each bind glutathione; these read KV and ES. One can recognise a GST C-terminal domain in the interval 88–223; sequence DLQARARVDE…ILKVRDCPPA (136 aa).

Belongs to the GST superfamily. Theta family. Homodimer. As to expression, in liver, highest expression found in central vein limiting plate hepatocytes. In lung, expressed mainly in club cells of the bronchiolar epithelium and, at low levels, in type II alveolar cells.

The protein resides in the cytoplasm. The catalysed reaction is RX + glutathione = an S-substituted glutathione + a halide anion + H(+). Conjugation of reduced glutathione to a wide number of exogenous and endogenous hydrophobic electrophiles. Also binds steroids, bilirubin, carcinogens and numerous organic anions. Has dichloromethane dehalogenase activity. The polypeptide is Glutathione S-transferase theta-1 (Gstt1) (Rattus norvegicus (Rat)).